A 147-amino-acid polypeptide reads, in one-letter code: DNA-directed RNA polymerase subunit 6 homolog (147 aa).

Residues 20–39 (ETEEENFVDSEEESEDKDEI) are disordered.

Belongs to the archaeal RpoK/eukaryotic RPB6 RNA polymerase subunit family. In terms of assembly, part of the viral DNA-directed RNA polymerase that consists of 8 polII-like subunits (RPB1, RPB2, RPB3, RPB5, RPB6, RPB7, RPB9, RPB10), a capping enzyme and a termination factor.

It is found in the host cytoplasm. The protein localises to the virion. Its function is as follows. Component of the DNA-directed RNA polymerase (RNAP) that catalyzes the transcription in the cytoplasm of viral DNA into RNA using the four ribonucleoside triphosphates as substrates. This chain is DNA-directed RNA polymerase subunit 6 homolog, found in Ornithodoros (relapsing fever ticks).